A 412-amino-acid polypeptide reads, in one-letter code: Serine hydroxymethyltransferase (412 aa).

(6S)-5,6,7,8-tetrahydrofolate is bound by residues Leu-117 and Gly-121–Leu-123. N6-(pyridoxal phosphate)lysine is present on Lys-226. Ser-349–Phe-351 lines the (6S)-5,6,7,8-tetrahydrofolate pocket.

This sequence belongs to the SHMT family. As to quaternary structure, homodimer. Pyridoxal 5'-phosphate is required as a cofactor.

It is found in the cytoplasm. The enzyme catalyses (6R)-5,10-methylene-5,6,7,8-tetrahydrofolate + glycine + H2O = (6S)-5,6,7,8-tetrahydrofolate + L-serine. It participates in one-carbon metabolism; tetrahydrofolate interconversion. It functions in the pathway amino-acid biosynthesis; glycine biosynthesis; glycine from L-serine: step 1/1. Catalyzes the reversible interconversion of serine and glycine with tetrahydrofolate (THF) serving as the one-carbon carrier. This reaction serves as the major source of one-carbon groups required for the biosynthesis of purines, thymidylate, methionine, and other important biomolecules. Also exhibits THF-independent aldolase activity toward beta-hydroxyamino acids, producing glycine and aldehydes, via a retro-aldol mechanism. The protein is Serine hydroxymethyltransferase of Lawsonia intracellularis (strain PHE/MN1-00).